Here is a 267-residue protein sequence, read N- to C-terminus: Chorismate mutase (267 aa).

The 256-residue stretch at 7 to 262 (LSDASKALDL…EVEYLMQRLK (256 aa)) folds into the Chorismate mutase domain. 6 residues coordinate L-tyrosine: R77, R78, N145, G147, S148, and T151. 3 residues coordinate L-tryptophan: N145, G147, and S148.

Homodimer.

It is found in the cytoplasm. The catalysed reaction is chorismate = prephenate. It functions in the pathway metabolic intermediate biosynthesis; prephenate biosynthesis; prephenate from chorismate: step 1/1. Its activity is regulated as follows. Each dimer has two allosteric binding sites that can bind the regulatory effectors tryptophan or tyrosine. Can bind either one tryptophan or one tyrosine, two tryptophan or two tyrosine or one tryptophan and one tyrosine, which differentially affect the catalytic activity. Activated by tryptophan and subject to feedback inhibition by tyrosine. In the presence of both tryptophan and tyrosine, the enzyme is in the activated state. In terms of biological role, catalyzes the Claisen rearrangement of chorismate to prephenate. Acts at the first branch point in the aromatic amino acid pathway where it steers biosynthesis towards phenylalanine and tyrosine, and away from tryptophan. The sequence is that of Chorismate mutase from Emericella nidulans (strain FGSC A4 / ATCC 38163 / CBS 112.46 / NRRL 194 / M139) (Aspergillus nidulans).